We begin with the raw amino-acid sequence, 528 residues long: uncharacterized protein (528 aa).

6–35 provides a ligand contact to FAD; it reads DYVVVGTGSAGAVVASRLSTDPATTVVALE. His468 (proton acceptor) is an active-site residue.

This sequence belongs to the GMC oxidoreductase family. It depends on FAD as a cofactor.

This is an uncharacterized protein from Mycobacterium bovis (strain ATCC BAA-935 / AF2122/97).